A 112-amino-acid chain; its full sequence is Ribosome-binding factor A (112 aa).

This sequence belongs to the RbfA family. In terms of assembly, monomer. Binds 30S ribosomal subunits, but not 50S ribosomal subunits or 70S ribosomes.

Its subcellular location is the cytoplasm. Functionally, one of several proteins that assist in the late maturation steps of the functional core of the 30S ribosomal subunit. Associates with free 30S ribosomal subunits (but not with 30S subunits that are part of 70S ribosomes or polysomes). Required for efficient processing of 16S rRNA. May interact with the 5'-terminal helix region of 16S rRNA. This Mycoplasma genitalium (strain ATCC 33530 / DSM 19775 / NCTC 10195 / G37) (Mycoplasmoides genitalium) protein is Ribosome-binding factor A.